The following is a 137-amino-acid chain: Large ribosomal subunit protein uL16c (137 aa).

It belongs to the universal ribosomal protein uL16 family. As to quaternary structure, part of the 50S ribosomal subunit.

It localises to the plastid. The protein resides in the chloroplast. The polypeptide is Large ribosomal subunit protein uL16c (Trieres chinensis (Marine centric diatom)).